Reading from the N-terminus, the 481-residue chain is Aspartyl/glutamyl-tRNA(Asn/Gln) amidotransferase subunit B (481 aa).

This sequence belongs to the GatB/GatE family. GatB subfamily. As to quaternary structure, heterotrimer of A, B and C subunits.

The catalysed reaction is L-glutamyl-tRNA(Gln) + L-glutamine + ATP + H2O = L-glutaminyl-tRNA(Gln) + L-glutamate + ADP + phosphate + H(+). The enzyme catalyses L-aspartyl-tRNA(Asn) + L-glutamine + ATP + H2O = L-asparaginyl-tRNA(Asn) + L-glutamate + ADP + phosphate + 2 H(+). Functionally, allows the formation of correctly charged Asn-tRNA(Asn) or Gln-tRNA(Gln) through the transamidation of misacylated Asp-tRNA(Asn) or Glu-tRNA(Gln) in organisms which lack either or both of asparaginyl-tRNA or glutaminyl-tRNA synthetases. The reaction takes place in the presence of glutamine and ATP through an activated phospho-Asp-tRNA(Asn) or phospho-Glu-tRNA(Gln). The chain is Aspartyl/glutamyl-tRNA(Asn/Gln) amidotransferase subunit B from Pseudomonas syringae pv. syringae (strain B728a).